The primary structure comprises 162 residues: Austinoid biosynthesis clusters protein J (162 aa).

This sequence belongs to the trt14 isomerase family. In terms of assembly, homodimer.

Its pathway is secondary metabolite biosynthesis; terpenoid biosynthesis. In terms of biological role, part of the gene cluster B that mediates the biosynthesis of austinol and dehydroaustinol, two fungal meroterpenoids. The first step of the pathway is the synthesis of 3,5-dimethylorsellinic acid by the polyketide synthase ausA. 3,5-dimethylorsellinic acid is then prenylated by the polyprenyl transferase ausN. Further epoxidation by the FAD-dependent monooxygenase ausM and cyclization by the probable terpene cyclase ausL lead to the formation of protoaustinoid A. Protoaustinoid A is then oxidized to spiro-lactone preaustinoid A3 by the combined action of the FAD-binding monooxygenases ausB and ausC, and the dioxygenase ausE. Acid-catalyzed keto-rearrangement and ring contraction of the tetraketide portion of preaustinoid A3 by ausJ lead to the formation of preaustinoid A4. The aldo-keto reductase ausK, with the help of ausH, is involved in the next step by transforming preaustinoid A4 into isoaustinone which is in turn hydroxylated by the P450 monooxygenase ausI to form austinolide. Finally, the cytochrome P450 monooxygenase ausG modifies austinolide to austinol. Austinol can be further modified to dehydroaustinol which forms a diffusible complex with diorcinol that initiates conidiation. Due to genetic rearrangements of the clusters and the subsequent loss of some enzymes, the end products of the Emericella nidulans austinoid biosynthesis clusters are austinol and dehydroaustinol, even if additional enzymes, such as the O-acetyltransferase ausQ and the cytochrome P450 monooxygenase ausR are still functional. This chain is Austinoid biosynthesis clusters protein J, found in Emericella nidulans (strain FGSC A4 / ATCC 38163 / CBS 112.46 / NRRL 194 / M139) (Aspergillus nidulans).